Here is a 316-residue protein sequence, read N- to C-terminus: Initiation factor TFIIB homolog (316 aa).

The protein belongs to the asfivirus C315R family.

Putative initation factor. In Ornithodoros (relapsing fever ticks), this protein is Initiation factor TFIIB homolog.